Here is a 548-residue protein sequence, read N- to C-terminus: 5-aminolevulinate synthase, mitochondrial (548 aa).

A mitochondrion-targeting transit peptide spans 1-22 (MQRSIFARFGNSSAAVSTLNRL). Positions 91, 204, and 223 each coordinate substrate. Residues serine 256, histidine 284, and threonine 334 each coordinate pyridoxal 5'-phosphate. The active site involves lysine 337. N6-(pyridoxal phosphate)lysine is present on lysine 337. 2 residues coordinate pyridoxal 5'-phosphate: threonine 366 and threonine 367. Residue threonine 452 participates in substrate binding.

It belongs to the class-II pyridoxal-phosphate-dependent aminotransferase family. As to quaternary structure, homodimer. Interacts with MCX1. Pyridoxal 5'-phosphate serves as cofactor.

It localises to the mitochondrion matrix. The catalysed reaction is succinyl-CoA + glycine + H(+) = 5-aminolevulinate + CO2 + CoA. The protein operates within porphyrin-containing compound metabolism; protoporphyrin-IX biosynthesis; 5-aminolevulinate from glycine: step 1/1. With respect to regulation, ihnhibited by hemin. Catalyzes the synthesis of 5-aminolevulinate (ALA) from succinyl-CoA and glycine, the first and rate-limiting step in heme biosynthesis. The chain is 5-aminolevulinate synthase, mitochondrial from Saccharomyces cerevisiae (strain ATCC 204508 / S288c) (Baker's yeast).